A 355-amino-acid chain; its full sequence is tRNA (guanine-N(1)-)-methyltransferase (355 aa).

Residues Gly-109 and 129 to 134 (IGDYVL) contribute to the S-adenosyl-L-methionine site.

Belongs to the RNA methyltransferase TrmD family. Homodimer.

It is found in the cytoplasm. It catalyses the reaction guanosine(37) in tRNA + S-adenosyl-L-methionine = N(1)-methylguanosine(37) in tRNA + S-adenosyl-L-homocysteine + H(+). Specifically methylates guanosine-37 in various tRNAs. The polypeptide is tRNA (guanine-N(1)-)-methyltransferase (Chlamydia caviae (strain ATCC VR-813 / DSM 19441 / 03DC25 / GPIC) (Chlamydophila caviae)).